The following is a 268-amino-acid chain: MINDNVHLGHRARKRFGQNFLHDQYTIDSIVSAIAPRQNDVMVEIGPGLGALTEPVCDQIDKLHVVELDRDLAARLREHPRLKDKLIVHEADAMKFNFDELAQPGRPLRIFGNLPYNISTPLIFHLLEKSQYITDMYFMLQKEVVERLAAGPNSKDYGRLTVMTQYYCQVMPVLEVGPHAFKPAPKVNSAVVRLAPWKKRPYEALNIADLQRVCQEGFGQRRKTIRNTFRSFITAEQLEEIDINPNLRPENLTLAQFVSIANWLTTHR.

S-adenosyl-L-methionine-binding residues include Asn-19, Leu-21, Gly-46, Glu-67, Asp-92, and Asn-113.

It belongs to the class I-like SAM-binding methyltransferase superfamily. rRNA adenine N(6)-methyltransferase family. RsmA subfamily.

The protein resides in the cytoplasm. It carries out the reaction adenosine(1518)/adenosine(1519) in 16S rRNA + 4 S-adenosyl-L-methionine = N(6)-dimethyladenosine(1518)/N(6)-dimethyladenosine(1519) in 16S rRNA + 4 S-adenosyl-L-homocysteine + 4 H(+). Functionally, specifically dimethylates two adjacent adenosines (A1518 and A1519) in the loop of a conserved hairpin near the 3'-end of 16S rRNA in the 30S particle. May play a critical role in biogenesis of 30S subunits. This is Ribosomal RNA small subunit methyltransferase A from Tolumonas auensis (strain DSM 9187 / NBRC 110442 / TA 4).